We begin with the raw amino-acid sequence, 319 residues long: Acetyl-coenzyme A carboxylase carboxyl transferase subunit alpha (319 aa).

The region spanning 35 to 296 (NLDEEVQRLR…KAQLLIDLAE (262 aa)) is the CoA carboxyltransferase C-terminal domain.

Belongs to the AccA family. In terms of assembly, acetyl-CoA carboxylase is a heterohexamer composed of biotin carboxyl carrier protein (AccB), biotin carboxylase (AccC) and two subunits each of ACCase subunit alpha (AccA) and ACCase subunit beta (AccD).

It localises to the cytoplasm. It carries out the reaction N(6)-carboxybiotinyl-L-lysyl-[protein] + acetyl-CoA = N(6)-biotinyl-L-lysyl-[protein] + malonyl-CoA. It functions in the pathway lipid metabolism; malonyl-CoA biosynthesis; malonyl-CoA from acetyl-CoA: step 1/1. Its function is as follows. Component of the acetyl coenzyme A carboxylase (ACC) complex. First, biotin carboxylase catalyzes the carboxylation of biotin on its carrier protein (BCCP) and then the CO(2) group is transferred by the carboxyltransferase to acetyl-CoA to form malonyl-CoA. This Photorhabdus laumondii subsp. laumondii (strain DSM 15139 / CIP 105565 / TT01) (Photorhabdus luminescens subsp. laumondii) protein is Acetyl-coenzyme A carboxylase carboxyl transferase subunit alpha.